A 55-amino-acid polypeptide reads, in one-letter code: Major pollen allergen Dac g 4 (55 aa).

This is Major pollen allergen Dac g 4 from Dactylis glomerata (Orchard grass).